A 195-amino-acid chain; its full sequence is Putative Tricorn-like protease N-terminal subunit (195 aa).

It belongs to the peptidase S41B family.

Its subcellular location is the cytoplasm. Degrades oligopeptides in a sequential manner. The protein is Putative Tricorn-like protease N-terminal subunit (triN) of Sulfurisphaera tokodaii (strain DSM 16993 / JCM 10545 / NBRC 100140 / 7) (Sulfolobus tokodaii).